The following is a 711-amino-acid chain: Triacylglycerol hydrolase DDHD2 (711 aa).

The segment at 1 to 24 (MSSVQSQQEQLSQSDPSPSPNSCS) is disordered. A WWE domain is found at 30–112 (DMDAGSLYEP…WDELASEVRR (83 aa)). Residue Ser-351 is the Nucleophile of the active site. Positions 385 to 448 (GDTPTLEEDL…NYFSTRKNSM (64 aa)) constitute an SAM domain. Position 447 is a phosphoserine (Ser-447). Disordered regions lie at residues 449-470 (GIKR…SEFC) and 609-638 (LQAS…EETS). The DDHD domain maps to 495 to 700 (LIYKPEIFFA…VLLVLKEIYQ (206 aa)). Residues 614-624 (TPEETEAEPES) are compositionally biased toward acidic residues.

It belongs to the PA-PLA1 family. As to quaternary structure, forms homooligomers and, to a much smaller extent, heterooligomers with DDHD1. As to expression, widely expressed (at protein level).

It is found in the cytoplasm. It localises to the cytosol. The protein localises to the endoplasmic reticulum-Golgi intermediate compartment. The protein resides in the golgi apparatus. Its subcellular location is the cis-Golgi network. It catalyses the reaction a triacylglycerol + H2O = a diacylglycerol + a fatty acid + H(+). The enzyme catalyses a diacylglycerol + H2O = a monoacylglycerol + a fatty acid + H(+). It carries out the reaction a 1,3-diacylglycerol + H2O = a 1-acylglycerol + a fatty acid + H(+). The catalysed reaction is a 1-acylglycerol + H2O = glycerol + a fatty acid + H(+). It catalyses the reaction 1,2,3-tri-(9Z-octadecenoyl)-glycerol + H2O = di-(9Z)-octadecenoylglycerol + (9Z)-octadecenoate + H(+). The enzyme catalyses di-(9Z)-octadecenoylglycerol + H2O = (9Z-octadecenoyl)-glycerol + (9Z)-octadecenoate + H(+). It carries out the reaction 1,3-di-(9Z-octadecenoyl)-glycerol + H2O = 1-(9Z-octadecenoyl)-glycerol + (9Z)-octadecenoate + H(+). The catalysed reaction is trihexadecanoylglycerol + H2O = dihexadecanoylglycerol + hexadecanoate + H(+). It catalyses the reaction 1,2-di-(9Z-octadecenoyl)-sn-glycero-3-phosphocholine + H2O = (9Z-octadecenoyl)-sn-glycero-3-phosphocholine + (9Z)-octadecenoate + H(+). The enzyme catalyses 1-(9Z-octadecenoyl)-glycerol + H2O = glycerol + (9Z)-octadecenoate + H(+). It carries out the reaction 1,2-di-(9Z-octadecenoyl)-sn-glycero-3-phosphate + H2O = 2-(9Z-octadecenoyl)-sn-glycero-3-phosphate + (9Z)-octadecenoate + H(+). The catalysed reaction is 1-hexadecanoyl-2-(9Z-octadecenoyl)-sn-glycero-3-phosphate + H2O = 2-(9Z-octadecenoyl)-sn-glycero-3-phosphate + hexadecanoate + H(+). It catalyses the reaction 1-hexadecanoyl-2-(9Z-octadecenoyl)-sn-glycero-3-phosphoethanolamine + H2O = 2-(9Z-octadecenoyl)-sn-glycero-3-phosphoethanolamine + hexadecanoate + H(+). The enzyme catalyses 1-hexadecanoyl-2-(9Z-octadecenoyl)-sn-glycero-3-phospho-L-serine + H2O = 2-(9Z-octadecenoyl)-sn-glycero-3-phospho-L-serine + hexadecanoate + H(+). It carries out the reaction 1-hexadecanoyl-2-(9Z-octadecenoyl)-sn-glycero-3-phosphocholine + H2O = 2-(9Z-octadecenoyl)-sn-glycero-3-phosphocholine + hexadecanoate + H(+). In terms of biological role, diacylglycerol (DAG) and triacylglycerol (TAG) lipase required for proper lipid homeostasis in the central nervous system. It cooperates with PNPLA2/ATGL in neuronal TAG catabolism and hydrolyzes sn-1,3 DAG downstream of PNPLA2/ATGL. In vitro, it also acts as a phospholipase that hydrolyzes preferentially phosphatidic acids, including 1,2-dioleoyl-sn-phosphatidic acid, phosphatidylcholine and phosphatidylethanolamine. Specifically binds to phosphatidylinositol 3-phosphate (PI(3)P), phosphatidylinositol 4-phosphate (PI(4)P), phosphatidylinositol 5-phosphate (PI(5)P) and possibly phosphatidylinositol 4,5-bisphosphate (PI(4,5)P2). May be involved in the maintenance of the endoplasmic reticulum and/or Golgi structures. May regulate the transport between Golgi apparatus and plasma membrane. The sequence is that of Triacylglycerol hydrolase DDHD2 from Homo sapiens (Human).